We begin with the raw amino-acid sequence, 199 residues long: NAD(P)H dehydrogenase (quinone) (199 aa).

The 187-residue stretch at 4–190 (ILVLYYSMYG…AIARFQGEHV (187 aa)) folds into the Flavodoxin-like domain. FMN contacts are provided by residues 10–15 (SMYGHI) and 79–81 (TRF). Residue Tyr-12 participates in NAD(+) binding. Trp-99 contacts substrate. Residues 114 to 119 (STGTGG) and His-134 contribute to the FMN site.

It belongs to the WrbA family. The cofactor is FMN.

The enzyme catalyses a quinone + NADH + H(+) = a quinol + NAD(+). It catalyses the reaction a quinone + NADPH + H(+) = a quinol + NADP(+). This chain is NAD(P)H dehydrogenase (quinone), found in Yersinia enterocolitica serotype O:8 / biotype 1B (strain NCTC 13174 / 8081).